Reading from the N-terminus, the 330-residue chain is FKBP12-interacting protein of 37 kDa (330 aa).

Met1 is modified (N-acetylmethionine). Residues 1–12 are compositionally biased toward acidic residues; that stretch reads MEFSSQDDDFGG. The interval 1-43 is disordered; it reads MEFSSQDDDFGGDDSAANATRASGNRRSFGDLEDDEDDIFGST. Polar residues predominate over residues 17–26; it reads ANATRASGNR. A coiled-coil region spans residues 56–308; it reads SLRGSLKNCK…KGLEIVSELV (253 aa).

It belongs to the fl(2)d family. In terms of assembly, forms homodimers. Interacts with MTA/EMB1706. Interacts with FKBP12; interaction is inhibited by the immunosuppressive drug FK506. Interacts with VIR. Associates with MTA, MTB, VIR and HAKAI to form the m6A writer complex which is essential for adenosine methylation at specific mRNA sequences. As to expression, ubiquitously expressed with higher levels in primary and lateral roots, leaves, trichomes, and in pollen grains (at protein level).

It localises to the nucleus speckle. It is found in the nucleus. The protein localises to the nucleoplasm. Its function is as follows. Probable regulatory subunit of the N6-methyltransferase complex, a multiprotein complex that mediates N6-methyladenosine (m6A) methylation at the 5'-[AG]GAC-3' consensus sites of some mRNAs. Associates with MTA, MTB, VIR and HAKAI to form the m6A writer complex which is essential for adenosine methylation at specific mRNA sequences. N6-methyladenosine (m6A) plays a role in mRNA stability, processing, translation efficiency and editing. Essential protein required during endosperm development and embryogenesis. Involved in endoreduplication, especially in trichomes. May play a role in splicing events. The sequence is that of FKBP12-interacting protein of 37 kDa from Arabidopsis thaliana (Mouse-ear cress).